We begin with the raw amino-acid sequence, 368 residues long: L-lactate oxidase (368 aa).

Residues 13-368 (VNAIDVLDLA…KQMKVKTTFA (356 aa)) enclose the FMN hydroxy acid dehydrogenase domain. Tyr39 is a pyruvate binding site. FMN-binding positions include 92–94 (PIA), Ser121, and Gln143. Tyr145 contributes to the pyruvate binding site. An FMN-binding site is contributed by Thr171. Arg180 serves as a coordination point for pyruvate. Residues Lys239 and Ser261 each contribute to the FMN site. Pyruvate contacts are provided by His263 and Arg266. The active-site Proton acceptor is His263. Residues 294 to 298 (DGGVQ) and Arg318 each bind FMN.

It belongs to the FMN-dependent alpha-hydroxy acid dehydrogenase family. Homotetramer. Requires FMN as cofactor.

The catalysed reaction is (S)-lactate + O2 = pyruvate + H2O2. The enzyme catalyses 2-hydroxyoctanoate + O2 = 2-oxooctanoate + H2O2. In terms of biological role, catalyzes the oxidation of (S)-lactate (L-lactate) to pyruvate, with a reduction of O2 to H2O2. To a lesser extent is also able to use 2-hydroxyoctanoate as substrate. May be involved in the utilization of L-lactate as an energy source for growth. This is L-lactate oxidase from Lacticaseibacillus rhamnosus (strain LMS2-1).